The sequence spans 227 residues: MGNIRETFFKKTCSEEIQLVLASASPRRLALLAQIGLDPHQVYATNIDETPKLREHPANLAKRLAKEKALKAQETFLWCNQNGKSNASAQKIVILAADTVVAVGRVILPKPESEDQAYECLRFLSGRSHKVYGAVCALNECGKITVKLVESRVRFRRLTSSLMEAYLNSGEWEGKAGGYAIQGKASAFVVHIAGSYSNVVGLPLAETMDLLTAYQYPLLSNWVAKTL.

Aspartate 98 functions as the Proton acceptor in the catalytic mechanism.

The protein belongs to the Maf family. YhdE subfamily. It depends on a divalent metal cation as a cofactor.

Its subcellular location is the cytoplasm. The catalysed reaction is dTTP + H2O = dTMP + diphosphate + H(+). It catalyses the reaction UTP + H2O = UMP + diphosphate + H(+). Nucleoside triphosphate pyrophosphatase that hydrolyzes dTTP and UTP. May have a dual role in cell division arrest and in preventing the incorporation of modified nucleotides into cellular nucleic acids. The protein is dTTP/UTP pyrophosphatase of Bartonella quintana (strain Toulouse) (Rochalimaea quintana).